The chain runs to 362 residues: Cobalt-precorrin-5B C(1)-methyltransferase (362 aa).

This sequence belongs to the CbiD family.

The catalysed reaction is Co-precorrin-5B + S-adenosyl-L-methionine = Co-precorrin-6A + S-adenosyl-L-homocysteine. Its pathway is cofactor biosynthesis; adenosylcobalamin biosynthesis; cob(II)yrinate a,c-diamide from sirohydrochlorin (anaerobic route): step 6/10. Catalyzes the methylation of C-1 in cobalt-precorrin-5B to form cobalt-precorrin-6A. The polypeptide is Cobalt-precorrin-5B C(1)-methyltransferase (Geotalea daltonii (strain DSM 22248 / JCM 15807 / FRC-32) (Geobacter daltonii)).